A 114-amino-acid chain; its full sequence is MKARIIYRASFDAAHAVKIEEWEELHGHTFSLEVVVEGEIKKGYVMDFLKLKKVVDGVVKELDHRNLNKIMDNPTTENIALWISERIRKNLPGDVKLKRLSLWEGNEFGVELEW.

Zn(2+) contacts are provided by H15, H26, and H28.

This sequence belongs to the PTPS family. Requires Zn(2+) as cofactor.

It catalyses the reaction 7,8-dihydroneopterin 3'-phosphate = glycolaldehyde phosphate + 6-hydroxymethyl-7,8-dihydropterin. In terms of biological role, catalyzes the conversion of 7,8-dihydroneopterin monophosphate (H2NMP) to 6-hydroxymethyl-7,8-dihydropterin (6-HMD). Cannot use 7,8-dihydroneopterin (H2Neo) or 7,8-dihydroneopterin triphosphate (H2NTP) as substrate. In Pyrococcus furiosus (strain ATCC 43587 / DSM 3638 / JCM 8422 / Vc1), this protein is Dihydroneopterin monophosphate aldolase.